Reading from the N-terminus, the 211-residue chain is Probable septum site-determining protein MinC (211 aa).

It belongs to the MinC family. Interacts with MinD and FtsZ.

In terms of biological role, cell division inhibitor that blocks the formation of polar Z ring septums. Rapidly oscillates between the poles of the cell to destabilize FtsZ filaments that have formed before they mature into polar Z rings. Prevents FtsZ polymerization. In Clostridium perfringens (strain 13 / Type A), this protein is Probable septum site-determining protein MinC.